We begin with the raw amino-acid sequence, 132 residues long: Large ribosomal subunit protein bL19 (132 aa).

The protein belongs to the bacterial ribosomal protein bL19 family.

Functionally, this protein is located at the 30S-50S ribosomal subunit interface and may play a role in the structure and function of the aminoacyl-tRNA binding site. This Nitrosomonas europaea (strain ATCC 19718 / CIP 103999 / KCTC 2705 / NBRC 14298) protein is Large ribosomal subunit protein bL19.